Reading from the N-terminus, the 227-residue chain is Probable GTP-binding protein EngB (227 aa).

The region spanning 30-219 (KKPQIIVVGR…MVKINKNVNE (190 aa)) is the EngB-type G domain. Residues 38–45 (GRSNVGKS), 63–67 (GVTLK), 80–83 (DLPG), 160–163 (NKMD), and 197–199 (IGI) contribute to the GTP site. The Mg(2+) site is built by S45 and T65.

This sequence belongs to the TRAFAC class TrmE-Era-EngA-EngB-Septin-like GTPase superfamily. EngB GTPase family. Mg(2+) is required as a cofactor.

In terms of biological role, necessary for normal cell division and for the maintenance of normal septation. This is Probable GTP-binding protein EngB from Methanococcus aeolicus (strain ATCC BAA-1280 / DSM 17508 / OCM 812 / Nankai-3).